A 189-amino-acid chain; its full sequence is Large ribosomal subunit protein uL6 (189 aa).

This sequence belongs to the universal ribosomal protein uL6 family. In terms of assembly, part of the 50S ribosomal subunit.

In terms of biological role, this protein binds to the 23S rRNA, and is important in its secondary structure. It is located near the subunit interface in the base of the L7/L12 stalk, and near the tRNA binding site of the peptidyltransferase center. The protein is Large ribosomal subunit protein uL6 of Bacteroides fragilis (strain ATCC 25285 / DSM 2151 / CCUG 4856 / JCM 11019 / LMG 10263 / NCTC 9343 / Onslow / VPI 2553 / EN-2).